Here is a 213-residue protein sequence, read N- to C-terminus: Orotate phosphoribosyltransferase (213 aa).

Residue Lys-26 coordinates 5-phospho-alpha-D-ribose 1-diphosphate. 34-35 (FF) is an orotate binding site. Residues 72 to 73 (YK), Arg-99, Lys-100, Lys-103, His-105, and 124 to 132 (DDVITAGTA) contribute to the 5-phospho-alpha-D-ribose 1-diphosphate site. 2 residues coordinate orotate: Thr-128 and Arg-156.

The protein belongs to the purine/pyrimidine phosphoribosyltransferase family. PyrE subfamily. In terms of assembly, homodimer. Mg(2+) serves as cofactor.

It carries out the reaction orotidine 5'-phosphate + diphosphate = orotate + 5-phospho-alpha-D-ribose 1-diphosphate. The protein operates within pyrimidine metabolism; UMP biosynthesis via de novo pathway; UMP from orotate: step 1/2. In terms of biological role, catalyzes the transfer of a ribosyl phosphate group from 5-phosphoribose 1-diphosphate to orotate, leading to the formation of orotidine monophosphate (OMP). The polypeptide is Orotate phosphoribosyltransferase (Pseudomonas savastanoi pv. phaseolicola (strain 1448A / Race 6) (Pseudomonas syringae pv. phaseolicola (strain 1448A / Race 6))).